A 75-amino-acid chain; its full sequence is Protein CYSTEINE-RICH TRANSMEMBRANE MODULE 5 (75 aa).

The interval 1-29 (MSQYSQNQYAGAYPTPPVSTGPYVAPPPL) is disordered. Positions 14–29 (PTPPVSTGPYVAPPPL) are enriched in pro residues. Residues 52–69 (AADGFLKGCLATMLACCV) traverse the membrane as a helical segment.

Belongs to the CYSTM1 family. In terms of assembly, heterodimers. Interacts with CYSTM7 and WIH1/CYSTM13. Mostly expressed in roots, stems, rosette leaves and siliques and, to a lower extent, in flowers and cauline leaves.

Its subcellular location is the cell membrane. It is found in the nucleus. Functionally, involved in resistance to abiotic stress. This chain is Protein CYSTEINE-RICH TRANSMEMBRANE MODULE 5, found in Arabidopsis thaliana (Mouse-ear cress).